Consider the following 144-residue polypeptide: MLVPKRVKHRREFRGKMRGEAKGGKEVTFGKYGLKALDSHWITNRQIEAARIAMTRYMKRGGKVWIKIFPHKSYTAKAIGVRMGSGKGAPEGWVAPVKRGKVLFEIDGVSEEVAREALRLASHKLPVKTKFVQREEVGGESNEG.

It belongs to the universal ribosomal protein uL16 family. In terms of assembly, part of the 50S ribosomal subunit.

Its function is as follows. Binds 23S rRNA and is also seen to make contacts with the A and possibly P site tRNAs. This is Large ribosomal subunit protein uL16 from Ligilactobacillus salivarius (strain UCC118) (Lactobacillus salivarius).